The chain runs to 167 residues: Phosphopantetheine adenylyltransferase (167 aa).

Ser-9 serves as a coordination point for substrate. ATP contacts are provided by residues 9–10 and His-17; that span reads SF. Substrate is bound by residues Lys-41, Leu-73, and Lys-87. ATP contacts are provided by residues 88–90, Glu-98, and 123–129; these read GLR and YSYLSSS.

Belongs to the bacterial CoaD family. In terms of assembly, homohexamer. Mg(2+) is required as a cofactor.

The protein localises to the cytoplasm. It catalyses the reaction (R)-4'-phosphopantetheine + ATP + H(+) = 3'-dephospho-CoA + diphosphate. Its pathway is cofactor biosynthesis; coenzyme A biosynthesis; CoA from (R)-pantothenate: step 4/5. In terms of biological role, reversibly transfers an adenylyl group from ATP to 4'-phosphopantetheine, yielding dephospho-CoA (dPCoA) and pyrophosphate. This Caldicellulosiruptor bescii (strain ATCC BAA-1888 / DSM 6725 / KCTC 15123 / Z-1320) (Anaerocellum thermophilum) protein is Phosphopantetheine adenylyltransferase.